A 116-amino-acid polypeptide reads, in one-letter code: Beta-2-microglobulin (116 aa).

The N-terminal stretch at 1-19 (MRALITFALLCLLYITVQG) is a signal peptide. An Ig-like C1-type domain is found at 24-111 (PKVHVYSHFP…RHMKETKKFS (88 aa)). A disulfide bond links C44 and C99.

This sequence belongs to the beta-2-microglobulin family. As to quaternary structure, heterodimer of an alpha chain and a beta chain. Beta-2-microglobulin is the beta-chain of major histocompatibility complex class I molecules.

Its subcellular location is the secreted. In terms of biological role, component of the class I major histocompatibility complex (MHC). Involved in the presentation of peptide antigens to the immune system. This Danio rerio (Zebrafish) protein is Beta-2-microglobulin (b2m).